The chain runs to 98 residues: DNA-directed RNA polymerase subunit omega (98 aa).

This sequence belongs to the RNA polymerase subunit omega family. As to quaternary structure, the RNAP catalytic core consists of 2 alpha, 1 beta, 1 beta' and 1 omega subunit. When a sigma factor is associated with the core the holoenzyme is formed, which can initiate transcription.

It catalyses the reaction RNA(n) + a ribonucleoside 5'-triphosphate = RNA(n+1) + diphosphate. Promotes RNA polymerase assembly. Latches the N- and C-terminal regions of the beta' subunit thereby facilitating its interaction with the beta and alpha subunits. This is DNA-directed RNA polymerase subunit omega from Tropheryma whipplei (strain Twist) (Whipple's bacillus).